The chain runs to 514 residues: Alstonine synthase (514 aa).

A helical membrane pass occupies residues 4–24 (PQFSCLLPAFFLLVVFLFLLI). The N-linked (GlcNAc...) asparagine glycan is linked to Asn-428. Cys-450 contributes to the heme binding site.

The protein belongs to the cytochrome P450 family. Heme is required as a cofactor.

The protein localises to the membrane. It carries out the reaction tetrahydroalstonine + A + reduced [NADPH--hemoprotein reductase] + O2 = alstonine + AH2 + oxidized [NADPH--hemoprotein reductase] + 2 H2O + H(+). Its pathway is alkaloid biosynthesis. Functionally, a cytochrome P450 monooxygenase involved in the biosynthesis of pentacyclic alkaloids natural products such as alstonine, putative antipsychotic compounds. Catalyzes the conversion of tetrahydroalstonine to alstonine. No oxidative activity towards ajmalicine. The chain is Alstonine synthase from Alstonia scholaris (Dogbane).